The following is a 395-amino-acid chain: Multidrug resistance protein MdtL (395 aa).

The next 12 helical transmembrane spans lie at 4–24 (FLLC…MYLV), 42–62 (IAFS…GKIA), 69–89 (PVAI…SRAS), 93–113 (LFLS…VVAF), 131–151 (LLNG…HLIM), 158–178 (SLFY…LFIL), 217–237 (VSVI…VMGF), 247–267 (ALTA…LGLF), 271–291 (TLML…SLAH), 295–315 (VTLF…GVAM), 328–350 (VASS…LAAI), and 355–377 (AMNM…IFSV).

Belongs to the major facilitator superfamily. DHA1 family. MdtL (TC 2.A.1.2.22) subfamily.

It localises to the cell inner membrane. This chain is Multidrug resistance protein MdtL, found in Salmonella dublin (strain CT_02021853).